The sequence spans 332 residues: 3-dehydrosphinganine reductase (332 aa).

A signal peptide spans 1–25 (MLLVVAAFIVAFVLLLYMISPLISP). The NADPH site is built by Gly-39, Ser-41, Ser-42, Gly-43, Arg-64, Asp-65, Lys-68, and Asp-93. Residues 39–43 (GGSSG) carry the GXSXG motif. Ser-172 serves as the catalytic Proton donor. Tyr-186 functions as the Proton acceptor in the catalytic mechanism. 2 residues coordinate NADP(+): Tyr-186 and Lys-190. The active-site Lowers pKa of active site Tyr is the Lys-190.

Belongs to the short-chain dehydrogenases/reductases (SDR) family.

Its subcellular location is the endoplasmic reticulum. It catalyses the reaction sphinganine + NADP(+) = 3-oxosphinganine + NADPH + H(+). It functions in the pathway lipid metabolism; sphingolipid metabolism. Functionally, catalyzes the reduction of 3'-oxosphinganine (3-ketodihydrosphingosine/KDS) to sphinganine (dihydrosphingosine/DHS), the second step of de novo sphingolipid biosynthesis. This chain is 3-dehydrosphinganine reductase (kdsr), found in Danio rerio (Zebrafish).